The primary structure comprises 486 residues: Glutamate--tRNA ligase (486 aa).

Positions 11–21 match the 'HIGH' region motif; that stretch reads PSPTGLLHIGN. The 'KMSKS' region signature appears at 255 to 259; that stretch reads KLSKR. Residue K258 coordinates ATP.

Belongs to the class-I aminoacyl-tRNA synthetase family. Glutamate--tRNA ligase type 1 subfamily. In terms of assembly, monomer.

The protein localises to the cytoplasm. It catalyses the reaction tRNA(Glu) + L-glutamate + ATP = L-glutamyl-tRNA(Glu) + AMP + diphosphate. In terms of biological role, catalyzes the attachment of glutamate to tRNA(Glu) in a two-step reaction: glutamate is first activated by ATP to form Glu-AMP and then transferred to the acceptor end of tRNA(Glu). The polypeptide is Glutamate--tRNA ligase (Streptococcus pneumoniae (strain Hungary19A-6)).